Reading from the N-terminus, the 85-residue chain is Large ribosomal subunit protein bL27 (85 aa).

The interval 1 to 20 is disordered; it reads MAHKKAGGSTRNGRDSEAKR.

It belongs to the bacterial ribosomal protein bL27 family.

This chain is Large ribosomal subunit protein bL27, found in Enterobacter sp. (strain 638).